Reading from the N-terminus, the 391-residue chain is Argininosuccinate synthase (391 aa).

6–14 (AYSGGLDTT) contributes to the ATP binding site. Tyr-84 serves as a coordination point for L-citrulline. Position 114 (Gly-114) interacts with ATP. Residues Thr-116, Asn-120, and Asp-121 each contribute to the L-aspartate site. An L-citrulline-binding site is contributed by Asn-120. Arg-124, Ser-171, Ser-180, Glu-253, and Tyr-265 together coordinate L-citrulline.

It belongs to the argininosuccinate synthase family. Type 1 subfamily. In terms of assembly, homotetramer.

The protein resides in the cytoplasm. The enzyme catalyses L-citrulline + L-aspartate + ATP = 2-(N(omega)-L-arginino)succinate + AMP + diphosphate + H(+). Its pathway is amino-acid biosynthesis; L-arginine biosynthesis; L-arginine from L-ornithine and carbamoyl phosphate: step 2/3. This Sulfolobus acidocaldarius (strain ATCC 33909 / DSM 639 / JCM 8929 / NBRC 15157 / NCIMB 11770) protein is Argininosuccinate synthase.